Consider the following 440-residue polypeptide: Chromosome partition protein MukF (440 aa).

The leucine-zipper stretch occupies residues 208 to 236 (LSETSGTLRELQDTLEAAGDKLQANLLRI).

Belongs to the MukF family. As to quaternary structure, interacts, and probably forms a ternary complex, with MukE and MukB via its C-terminal region. The complex formation is stimulated by calcium or magnesium. It is required for an interaction between MukE and MukB.

It is found in the cytoplasm. Its subcellular location is the nucleoid. In terms of biological role, involved in chromosome condensation, segregation and cell cycle progression. May participate in facilitating chromosome segregation by condensation DNA from both sides of a centrally located replisome during cell division. Not required for mini-F plasmid partitioning. Probably acts via its interaction with MukB and MukE. Overexpression results in anucleate cells. It has a calcium binding activity. The protein is Chromosome partition protein MukF of Escherichia coli O127:H6 (strain E2348/69 / EPEC).